Reading from the N-terminus, the 84-residue chain is Small ribosomal subunit protein bS18 (84 aa).

The protein belongs to the bacterial ribosomal protein bS18 family. As to quaternary structure, part of the 30S ribosomal subunit. Forms a tight heterodimer with protein bS6.

Functionally, binds as a heterodimer with protein bS6 to the central domain of the 16S rRNA, where it helps stabilize the platform of the 30S subunit. This is Small ribosomal subunit protein bS18 from Methylorubrum extorquens (strain CM4 / NCIMB 13688) (Methylobacterium extorquens).